The following is a 443-amino-acid chain: Trigger factor (443 aa).

Residues 168–254 (GDFVTIDFEG…IKNLKEKKLP (87 aa)) form the PPIase FKBP-type domain.

The protein belongs to the FKBP-type PPIase family. Tig subfamily.

It localises to the cytoplasm. It carries out the reaction [protein]-peptidylproline (omega=180) = [protein]-peptidylproline (omega=0). Involved in protein export. Acts as a chaperone by maintaining the newly synthesized protein in an open conformation. Functions as a peptidyl-prolyl cis-trans isomerase. This Syntrophus aciditrophicus (strain SB) protein is Trigger factor.